We begin with the raw amino-acid sequence, 249 residues long: Elongator complex protein 6 homolog (249 aa).

Belongs to the ELP6 family. As to quaternary structure, component of the elongator complex.

The protein resides in the cytoplasm. It localises to the nucleus. It participates in tRNA modification; 5-methoxycarbonylmethyl-2-thiouridine-tRNA biosynthesis. In terms of biological role, component of the elongator complex which is required for multiple tRNA modifications, including mcm5U (5-methoxycarbonylmethyl uridine), mcm5s2U (5-methoxycarbonylmethyl-2-thiouridine), and ncm5U (5-carbamoylmethyl uridine). The elongator complex catalyzes formation of carboxymethyluridine in the wobble base at position 34 in tRNAs. The chain is Elongator complex protein 6 homolog from Schizosaccharomyces pombe (strain 972 / ATCC 24843) (Fission yeast).